The sequence spans 1107 residues: Membrane-associated guanylate kinase, WW and PDZ domain-containing protein 3 (1107 aa).

A PDZ 1 domain is found at 17–102 (ECGLSGVGGD…PIRLKTVKPG (86 aa)). The region spanning 110–284 (RHYLSLQFQK…SMDFRNYLTR (175 aa)) is the Guanylate kinase-like domain. Residue 117–124 (FQKGSIDH) participates in ATP binding. Residues 210–277 (FDTETQRKRT…SYNQTNSSMD (68 aa)) form a disordered region. A compositionally biased stretch (polar residues) spans 220–231 (TSVSKMQRTDSS). Positions 232–241 (LPEEEDEEER) are enriched in acidic residues. Residues 251–261 (TDHRDRQEPSE) are compositionally biased toward basic and acidic residues. Residues 267 to 277 (PSYNQTNSSMD) are compositionally biased toward polar residues. WW domains are found at residues 289 to 322 (EPLP…DPRL) and 335 to 368 (GELP…NPVL). The tract at residues 374–398 (KQLNPAPSEGTVHQEPENSQFTRDP) is disordered. 4 consecutive PDZ domains span residues 407-489 (HTSL…TLCR), 577-653 (TIPL…LILR), 727-809 (DVFL…TVRR), and 853-940 (DVIL…IAEE). The segment at 941 to 975 (EHRGPPSGSNSARQSPAPQHRPMGQTQPTYGTLDR) is disordered. Residues 947 to 957 (SGSNSARQSPA) are compositionally biased toward polar residues. The PDZ 6 domain maps to 1003-1085 (PVELERGPRG…KVLLLLRPGT (83 aa)).

This sequence belongs to the MAGUK family.

The protein localises to the cell membrane. It is found in the cell junction. The protein resides in the tight junction. Functionally, acts as a scaffolding protein at cell-cell junctions, thereby regulating various cellular and signaling processes. The protein is Membrane-associated guanylate kinase, WW and PDZ domain-containing protein 3 (magi3) of Xenopus tropicalis (Western clawed frog).